The following is an 872-amino-acid chain: Exoglucanase A (872 aa).

An N-terminal signal peptide occupies residues 1–40 (MSTLGKRAGVRRRVRAVATAATATALVAVPLTTLATSASA). The interval 41 to 477 (APVHVDNPYA…PVIGGTTPVE (437 aa)) is catalytic. 2 disulfides stabilise this stretch: cysteine 140–cysteine 202 and cysteine 374–cysteine 428. Aspartate 188 functions as the Proton donor in the catalytic mechanism. Aspartate 410 acts as the Nucleophile in catalysis. Fibronectin type-III domains follow at residues 484–569 (VPTG…TQSG), 579–667 (VPAG…TQTG), and 677–765 (VPTG…TQAA). The region spanning 763–872 (QAATSGGCTV…TLNGVACTLG (110 aa)) is the CBM2 domain. Cysteine 770 and cysteine 869 form a disulfide bridge.

This sequence belongs to the glycosyl hydrolase 6 (cellulase B) family.

The catalysed reaction is Hydrolysis of (1-&gt;4)-beta-D-glucosidic linkages in cellulose and cellotetraose, releasing cellobiose from the non-reducing ends of the chains.. Its function is as follows. This enzyme hydrolyzes 1,4-beta-D-glucosidic linkages of cellulose. Weak activity against carboxymethylcellulose, bacterial microcrystalline cellulose and barley beta-glucan. Also has weak endoglucanase activity. Hydrolyzes glucosidic bonds with inversion of anomeric configuration. This is Exoglucanase A (cbhA) from Cellulomonas fimi (strain ATCC 484 / DSM 20113 / JCM 1341 / CCUG 24087 / LMG 16345 / NBRC 15513 / NCIMB 8980 / NCTC 7547 / NRS-133).